We begin with the raw amino-acid sequence, 501 residues long: Acetylcholine receptor subunit beta (501 aa).

A signal peptide spans 1–23; that stretch reads MALGALLLILGILGTPLAPGARG. Topologically, residues 24–244 are extracellular; that stretch reads SEAEGQLLKK…VIFYLIIRRK (221 aa). Residues cysteine 151 and cysteine 165 are joined by a disulfide bond. Asparagine 164 is a glycosylation site (N-linked (GlcNAc...) asparagine). 3 helical membrane-spanning segments follow: residues 245 to 269, 277 to 295, and 311 to 332; these read PLFYLVNVIAPCILITLLAIFVFYL, MGLSIFALLTLTVFLLLLA, and YLMFTMILVTFSVILSVVVLNL. Residues 333–469 lie on the Cytoplasmic side of the membrane; it reads HHRSPHTHQM…WQFVAMVVDR (137 aa). The disordered stretch occupies residues 362–381; it reads RPKPERDQLPEPHHSFSPRS. The span at 363-375 shows a compositional bias: basic and acidic residues; it reads PKPERDQLPEPHH. Tyrosine 390 is subject to Phosphotyrosine; by Tyr-kinases. A helical membrane pass occupies residues 470–488; that stretch reads LFLWTFIVFTSVGTLVIFL.

It belongs to the ligand-gated ion channel (TC 1.A.9) family. Acetylcholine receptor (TC 1.A.9.1) subfamily. Beta-1/CHRNB1 sub-subfamily. In terms of assembly, pentamer of two alpha chains, and one each of the beta, delta, and gamma (in immature muscle) or epsilon (in mature muscle) chains. The muscle heteropentamer composed of alpha-1, beta-1, delta, epsilon subunits interacts with the alpha-conotoxin ImII.

Its subcellular location is the postsynaptic cell membrane. It is found in the cell membrane. It carries out the reaction K(+)(in) = K(+)(out). The catalysed reaction is Na(+)(in) = Na(+)(out). After binding acetylcholine, the AChR responds by an extensive change in conformation that affects all subunits and leads to opening of an ion-conducting channel across the plasma membrane. The protein is Acetylcholine receptor subunit beta (Chrnb1) of Rattus norvegicus (Rat).